A 273-amino-acid polypeptide reads, in one-letter code: Putative pyruvate, phosphate dikinase regulatory protein (273 aa).

153–160 contacts ADP; it reads GVSRTSKT.

This sequence belongs to the pyruvate, phosphate/water dikinase regulatory protein family. PDRP subfamily.

The catalysed reaction is N(tele)-phospho-L-histidyl/L-threonyl-[pyruvate, phosphate dikinase] + ADP = N(tele)-phospho-L-histidyl/O-phospho-L-threonyl-[pyruvate, phosphate dikinase] + AMP + H(+). It catalyses the reaction N(tele)-phospho-L-histidyl/O-phospho-L-threonyl-[pyruvate, phosphate dikinase] + phosphate + H(+) = N(tele)-phospho-L-histidyl/L-threonyl-[pyruvate, phosphate dikinase] + diphosphate. In terms of biological role, bifunctional serine/threonine kinase and phosphorylase involved in the regulation of the pyruvate, phosphate dikinase (PPDK) by catalyzing its phosphorylation/dephosphorylation. This is Putative pyruvate, phosphate dikinase regulatory protein from Sinorhizobium medicae (strain WSM419) (Ensifer medicae).